Reading from the N-terminus, the 728-residue chain is Phosphoribosylformylglycinamidine synthase subunit PurL (728 aa).

H42 is an active-site residue. ATP-binding residues include Y45 and K84. Residue E86 participates in Mg(2+) binding. Substrate-binding positions include S87–H90 and R109. Catalysis depends on H88, which acts as the Proton acceptor. D110 serves as a coordination point for Mg(2+). Substrate is bound at residue Q237. Residue D265 participates in Mg(2+) binding. Residue E309–Q311 coordinates substrate. ATP is bound by residues D491 and G528. N529 contacts Mg(2+). S531 provides a ligand contact to substrate.

Belongs to the FGAMS family. As to quaternary structure, monomer. Part of the FGAM synthase complex composed of 1 PurL, 1 PurQ and 2 PurS subunits.

The protein localises to the cytoplasm. The enzyme catalyses N(2)-formyl-N(1)-(5-phospho-beta-D-ribosyl)glycinamide + L-glutamine + ATP + H2O = 2-formamido-N(1)-(5-O-phospho-beta-D-ribosyl)acetamidine + L-glutamate + ADP + phosphate + H(+). It functions in the pathway purine metabolism; IMP biosynthesis via de novo pathway; 5-amino-1-(5-phospho-D-ribosyl)imidazole from N(2)-formyl-N(1)-(5-phospho-D-ribosyl)glycinamide: step 1/2. Its function is as follows. Part of the phosphoribosylformylglycinamidine synthase complex involved in the purines biosynthetic pathway. Catalyzes the ATP-dependent conversion of formylglycinamide ribonucleotide (FGAR) and glutamine to yield formylglycinamidine ribonucleotide (FGAM) and glutamate. The FGAM synthase complex is composed of three subunits. PurQ produces an ammonia molecule by converting glutamine to glutamate. PurL transfers the ammonia molecule to FGAR to form FGAM in an ATP-dependent manner. PurS interacts with PurQ and PurL and is thought to assist in the transfer of the ammonia molecule from PurQ to PurL. The chain is Phosphoribosylformylglycinamidine synthase subunit PurL from Campylobacter jejuni subsp. jejuni serotype O:23/36 (strain 81-176).